Consider the following 293-residue polypeptide: Heterogeneous nuclear ribonucleoprotein D-like-A (293 aa).

The segment at 1–21 (MAGFGAAPDFNEGSKINASKN) is disordered. RRM domains follow at residues 26 to 108 (GKMF…KGKE) and 111 to 188 (KKVF…AAQP). 2 disordered regions span residues 193–224 (RQQQQKQQRGGRGAVTGRGGTRGRGRGQGWNQ) and 274–293 (QSTYGKARGGGNHQNNYQPY). Residues 202-222 (GGRGAVTGRGGTRGRGRGQGW) are compositionally biased toward gly residues.

The protein localises to the nucleus. It localises to the cytoplasm. Its function is as follows. Acts as a transcriptional regulator. Binds DNA and RNA. The sequence is that of Heterogeneous nuclear ribonucleoprotein D-like-A (hnrnpdl-a) from Xenopus laevis (African clawed frog).